The chain runs to 308 residues: Aspartate carbamoyltransferase catalytic subunit (308 aa).

Carbamoyl phosphate-binding residues include R50 and T51. L-aspartate is bound at residue K78. Carbamoyl phosphate is bound by residues R100, H131, and Q134. L-aspartate contacts are provided by R164 and R216. Carbamoyl phosphate-binding residues include A259 and P260.

The protein belongs to the aspartate/ornithine carbamoyltransferase superfamily. ATCase family. In terms of assembly, heterododecamer (2C3:3R2) of six catalytic PyrB chains organized as two trimers (C3), and six regulatory PyrI chains organized as three dimers (R2).

It carries out the reaction carbamoyl phosphate + L-aspartate = N-carbamoyl-L-aspartate + phosphate + H(+). It participates in pyrimidine metabolism; UMP biosynthesis via de novo pathway; (S)-dihydroorotate from bicarbonate: step 2/3. Its function is as follows. Catalyzes the condensation of carbamoyl phosphate and aspartate to form carbamoyl aspartate and inorganic phosphate, the committed step in the de novo pyrimidine nucleotide biosynthesis pathway. This Oenococcus oeni (strain ATCC BAA-331 / PSU-1) protein is Aspartate carbamoyltransferase catalytic subunit.